The chain runs to 905 residues: DNA gyrase subunit A (905 aa).

The region spanning 35 to 524 is the Topo IIA-type catalytic domain; it reads IPDVRDGLKP…GEFDQDIEDL (490 aa). Tyr123 (O-(5'-phospho-DNA)-tyrosine intermediate) is an active-site residue. The GyrA-box motif lies at 551–557; sequence QKRGGKG. Residues 885-905 form a disordered region; the sequence is TAESEEDSELEEEGLEQSEEV. Residues 886–905 are compositionally biased toward acidic residues; that stretch reads AESEEDSELEEEGLEQSEEV.

Belongs to the type II topoisomerase GyrA/ParC subunit family. As to quaternary structure, heterotetramer, composed of two GyrA and two GyrB chains. In the heterotetramer, GyrA contains the active site tyrosine that forms a transient covalent intermediate with DNA, while GyrB binds cofactors and catalyzes ATP hydrolysis.

Its subcellular location is the cytoplasm. The enzyme catalyses ATP-dependent breakage, passage and rejoining of double-stranded DNA.. Its function is as follows. A type II topoisomerase that negatively supercoils closed circular double-stranded (ds) DNA in an ATP-dependent manner to modulate DNA topology and maintain chromosomes in an underwound state. Negative supercoiling favors strand separation, and DNA replication, transcription, recombination and repair, all of which involve strand separation. Also able to catalyze the interconversion of other topological isomers of dsDNA rings, including catenanes and knotted rings. Type II topoisomerases break and join 2 DNA strands simultaneously in an ATP-dependent manner. In Rickettsia conorii (strain ATCC VR-613 / Malish 7), this protein is DNA gyrase subunit A.